The sequence spans 504 residues: Maturase K (504 aa).

This sequence belongs to the intron maturase 2 family. MatK subfamily.

It is found in the plastid. It localises to the chloroplast. Its function is as follows. Usually encoded in the trnK tRNA gene intron. Probably assists in splicing its own and other chloroplast group II introns. The sequence is that of Maturase K from Nepenthes gracilis (Slender pitcher plant).